A 473-amino-acid chain; its full sequence is Aspartyl/glutamyl-tRNA(Asn/Gln) amidotransferase subunit B (473 aa).

It belongs to the GatB/GatE family. GatB subfamily. Heterotrimer of A, B and C subunits.

It catalyses the reaction L-glutamyl-tRNA(Gln) + L-glutamine + ATP + H2O = L-glutaminyl-tRNA(Gln) + L-glutamate + ADP + phosphate + H(+). It carries out the reaction L-aspartyl-tRNA(Asn) + L-glutamine + ATP + H2O = L-asparaginyl-tRNA(Asn) + L-glutamate + ADP + phosphate + 2 H(+). Its function is as follows. Allows the formation of correctly charged Asn-tRNA(Asn) or Gln-tRNA(Gln) through the transamidation of misacylated Asp-tRNA(Asn) or Glu-tRNA(Gln) in organisms which lack either or both of asparaginyl-tRNA or glutaminyl-tRNA synthetases. The reaction takes place in the presence of glutamine and ATP through an activated phospho-Asp-tRNA(Asn) or phospho-Glu-tRNA(Gln). The chain is Aspartyl/glutamyl-tRNA(Asn/Gln) amidotransferase subunit B from Levilactobacillus brevis (strain ATCC 367 / BCRC 12310 / CIP 105137 / JCM 1170 / LMG 11437 / NCIMB 947 / NCTC 947) (Lactobacillus brevis).